Consider the following 470-residue polypeptide: Poly(A) polymerase catalytic subunit (470 aa).

Residues aspartate 192 and aspartate 194 contribute to the active site.

This sequence belongs to the poxviridae poly(A) polymerase catalytic subunit family. Heterodimer of a large (catalytic) subunit and a small (regulatory) subunit.

It catalyses the reaction RNA(n) + ATP = RNA(n)-3'-adenine ribonucleotide + diphosphate. Its function is as follows. Polymerase that creates the 3'-poly(A) tail of mRNA's. The protein is Poly(A) polymerase catalytic subunit (PAPL) of Molluscum contagiosum virus subtype 1 (MOCV).